We begin with the raw amino-acid sequence, 73 residues long: Acyl carrier protein homolog (73 aa).

A Carrier domain is found at methionine 1–serine 72. Serine 32 bears the O-(pantetheine 4'-phosphoryl)serine mark.

4'-phosphopantetheine is transferred from CoA to a specific serine of the apo-ACP-like protein.

It participates in lipid metabolism; fatty acid biosynthesis. Its function is as follows. Carrier of the growing fatty acid chain in fatty acid biosynthesis. The protein is Acyl carrier protein homolog of Mycoplasmopsis pulmonis (strain UAB CTIP) (Mycoplasma pulmonis).